The sequence spans 207 residues: LexA repressor (207 aa).

Positions 28–48 form a DNA-binding region, H-T-H motif; the sequence is VREIGEAVGLASSSTVHGHLS. Catalysis depends on for autocatalytic cleavage activity residues S129 and K167.

It belongs to the peptidase S24 family. Homodimer.

The catalysed reaction is Hydrolysis of Ala-|-Gly bond in repressor LexA.. Its function is as follows. Represses a number of genes involved in the response to DNA damage (SOS response), including recA and lexA. In the presence of single-stranded DNA, RecA interacts with LexA causing an autocatalytic cleavage which disrupts the DNA-binding part of LexA, leading to derepression of the SOS regulon and eventually DNA repair. This Halalkalibacterium halodurans (strain ATCC BAA-125 / DSM 18197 / FERM 7344 / JCM 9153 / C-125) (Bacillus halodurans) protein is LexA repressor.